The sequence spans 360 residues: GDSL esterase/lipase At1g58430 (360 aa).

Residues 1-23 form the signal peptide; it reads MWTSKTISFTLFITTTLLGSCNA. N-linked (GlcNAc...) asparagine glycosylation occurs at asparagine 22. Serine 42 functions as the Nucleophile in the catalytic mechanism. Asparagine 104 and asparagine 326 each carry an N-linked (GlcNAc...) asparagine glycan. Catalysis depends on residues aspartate 334 and histidine 337.

It belongs to the 'GDSL' lipolytic enzyme family.

It is found in the secreted. The protein is GDSL esterase/lipase At1g58430 of Arabidopsis thaliana (Mouse-ear cress).